A 254-amino-acid chain; its full sequence is Inner membrane protein YabI (254 aa).

Residues 1 to 7 (MQALLEH) lie on the Periplasmic side of the membrane. Helical transmembrane passes span 8–28 (FITQSTVYSLMAVVLVAFLES) and 29–49 (LALVGLILPGTVLMAGLGALI). The Periplasmic portion of the chain corresponds to 50–58 (GSGELSFWH). A helical membrane pass occupies residues 59–79 (AWLAGIIGCLMGDWISFWLGW). At 80-144 (RFKKPLHRWS…LPVAKFITPN (65 aa)) the chain is on the cytoplasmic side. The chain crosses the membrane as a helical span at residues 145–165 (IIGCLLWPPFYFLPGILAGAA). Residues 166-178 (IDIPAGMQSGEFK) lie on the Periplasmic side of the membrane. The helical transmembrane segment at 179-199 (WLLLATAVFLWVGGWLCWRLW) threads the bilayer. The Cytoplasmic segment spans residues 200 to 215 (RSGKATDRLSHYLSRG). The chain crosses the membrane as a helical span at residues 216-236 (RLLWLTPLISAIGVVALVVLI). Topologically, residues 237 to 254 (RHPLMPVYIDILRKVVGV) are periplasmic.

Belongs to the DedA family.

Its subcellular location is the cell inner membrane. The sequence is that of Inner membrane protein YabI (yabI) from Escherichia coli (strain K12).